The chain runs to 160 residues: MGVFTYETEFTSVIPPPRLFKAFILDADNLIPKIAPQAVKCAEIIEGDGGVGTIKKITFGEGSQFGSVTHKIDGIDKDNFVYSYSLVEGDALSDKIEKISYETKLVASSDGGSIIKSTSNYHTKGDVEIKEEHVKAGKEKASHLFKLVEGYLLANPNEYC.

Belongs to the BetVI family. In terms of processing, phosphorylated in vivo. Phosphorylation prevents its activity as ribonuclease.

Functionally, possesses ribonuclease activity in vitro. This is Major strawberry allergen Fra a 1.05 from Fragaria ananassa (Strawberry).